The following is a 95-amino-acid chain: Putative regulatory protein STH1338 (95 aa).

This sequence belongs to the RemA family.

This chain is Putative regulatory protein STH1338, found in Symbiobacterium thermophilum (strain DSM 24528 / JCM 14929 / IAM 14863 / T).